An 84-amino-acid polypeptide reads, in one-letter code: Putative membrane protein insertion efficiency factor (84 aa).

This sequence belongs to the UPF0161 family.

It localises to the cell membrane. Its function is as follows. Could be involved in insertion of integral membrane proteins into the membrane. The chain is Putative membrane protein insertion efficiency factor from Staphylococcus carnosus (strain TM300).